A 375-amino-acid chain; its full sequence is Succinyl-diaminopimelate desuccinylase (375 aa).

His66 contacts Zn(2+). Residue Asp68 is part of the active site. Residue Asp99 coordinates Zn(2+). Glu133 serves as the catalytic Proton acceptor. The Zn(2+) site is built by Glu134, Glu162, and His348.

It belongs to the peptidase M20A family. DapE subfamily. As to quaternary structure, homodimer. Requires Zn(2+) as cofactor. The cofactor is Co(2+).

It carries out the reaction N-succinyl-(2S,6S)-2,6-diaminopimelate + H2O = (2S,6S)-2,6-diaminopimelate + succinate. The protein operates within amino-acid biosynthesis; L-lysine biosynthesis via DAP pathway; LL-2,6-diaminopimelate from (S)-tetrahydrodipicolinate (succinylase route): step 3/3. In terms of biological role, catalyzes the hydrolysis of N-succinyl-L,L-diaminopimelic acid (SDAP), forming succinate and LL-2,6-diaminopimelate (DAP), an intermediate involved in the bacterial biosynthesis of lysine and meso-diaminopimelic acid, an essential component of bacterial cell walls. This chain is Succinyl-diaminopimelate desuccinylase, found in Shigella boydii serotype 18 (strain CDC 3083-94 / BS512).